The sequence spans 393 residues: tRNA(Met) cytidine acetate ligase (393 aa).

Residues glycine 81, asparagine 142, and arginine 167 each contribute to the ATP site.

The protein belongs to the TmcAL family.

It localises to the cytoplasm. It carries out the reaction cytidine(34) in elongator tRNA(Met) + acetate + ATP = N(4)-acetylcytidine(34) in elongator tRNA(Met) + AMP + diphosphate. Functionally, catalyzes the formation of N(4)-acetylcytidine (ac(4)C) at the wobble position of elongator tRNA(Met), using acetate and ATP as substrates. First activates an acetate ion to form acetyladenylate (Ac-AMP) and then transfers the acetyl group to tRNA to form ac(4)C34. In Bacillus anthracis (strain A0248), this protein is tRNA(Met) cytidine acetate ligase.